The following is an 86-amino-acid chain: MVVIRLSRGGSKRRPFYNIVAANSANRRDGRFLERVGFYNPVASGGEEALRIAFDRVEHWVSHGAQLSPTAARLVKQAQAKVAPAA.

The protein belongs to the bacterial ribosomal protein bS16 family.

The protein is Small ribosomal subunit protein bS16 of Leptothrix cholodnii (strain ATCC 51168 / LMG 8142 / SP-6) (Leptothrix discophora (strain SP-6)).